The primary structure comprises 224 residues: 7-cyano-7-deazaguanine synthase (224 aa).

Residue 12-22 coordinates ATP; that stretch reads LSGGLDSSTVT. Residues C193, C201, C204, and C207 each contribute to the Zn(2+) site.

The protein belongs to the QueC family. Zn(2+) serves as cofactor.

It carries out the reaction 7-carboxy-7-deazaguanine + NH4(+) + ATP = 7-cyano-7-deazaguanine + ADP + phosphate + H2O + H(+). It participates in purine metabolism; 7-cyano-7-deazaguanine biosynthesis. Catalyzes the ATP-dependent conversion of 7-carboxy-7-deazaguanine (CDG) to 7-cyano-7-deazaguanine (preQ(0)). This Prochlorococcus marinus (strain MIT 9215) protein is 7-cyano-7-deazaguanine synthase.